The primary structure comprises 169 residues: MSAKREFSHITLASTPFKKRIDQNSLKTDSDIEKDTNIAHKCAERFNYNTNLHRKVTLSDRFELAALGYEMKAKPRTIIEKHNDCDEFHFIYRKEKKNDYGTGSPLSAGLSLSNPLPAGRGFLSPAIQNTSNQFTFSGSPRITPQKHTPVSANHKPARSIFDDIPSNIA.

The segment covering 137–151 (SGSPRITPQKHTPVS) has biased composition (polar residues). Residues 137–169 (SGSPRITPQKHTPVSANHKPARSIFDDIPSNIA) are disordered.

As to quaternary structure, component of the pid-1 variant of the PETISCO complex (also called the pid-3, erh-2, tofu-6, and ife-3 small RNA complex) containing at least pid-1, tofu-6, ife-3, pid-3, and erh-2, which is required for the biogenesis of a class of 21 nucleotide PIWI-interacting RNAs (piRNAs) that possess a uracil residue at the 5'-end (also called 21U-RNAs). Within the complex interacts with pid-3; the interaction is direct. Within the complex interacts with erh-2. Within the complex interacts with tofu-6. Expressed predominantly in the germline (at protein level).

The protein localises to the cytoplasm. Its subcellular location is the nucleus. It localises to the perinuclear region. Functionally, component of the pid-1 variant of the PETISCO complex which is required for the biogenesis of a class of 21 nucleotide PIWI-interacting RNAs (piRNAs) that possess a uracil residue at the 5'-end (also called 21U-RNAs). Within the complex acts as an adapter which binds to the complex via erh-2. Involved in the biogenesis of 21U-RNAs which guide the piwi protein prg-1 to its DNA targets for silencing. Plays a role in small RNA-directed transgenerational epigenetic inheritance. The protein is Protein pid-1 of Caenorhabditis elegans.